The primary structure comprises 403 residues: Ribosomal RNA large subunit methyltransferase I (403 aa).

A PUA domain is found at 9–86 (YPRLVLSKGR…KAESIDIAFF (78 aa)).

It belongs to the methyltransferase superfamily. RlmI family.

It is found in the cytoplasm. It catalyses the reaction cytidine(1962) in 23S rRNA + S-adenosyl-L-methionine = 5-methylcytidine(1962) in 23S rRNA + S-adenosyl-L-homocysteine + H(+). Specifically methylates the cytosine at position 1962 (m5C1962) of 23S rRNA. This is Ribosomal RNA large subunit methyltransferase I from Salmonella gallinarum (strain 287/91 / NCTC 13346).